Consider the following 563-residue polypeptide: Light-independent protochlorophyllide reductase subunit B (563 aa).

Aspartate 36 is a [4Fe-4S] cluster binding site. The active-site Proton donor is the aspartate 293. Position 437–438 (437–438) interacts with substrate; the sequence is GM. The interval 459–478 is disordered; that stretch reads ERREAEFGNQKVETGEPGTG.

Belongs to the ChlB/BchB/BchZ family. As to quaternary structure, protochlorophyllide reductase is composed of three subunits; BchL, BchN and BchB. Forms a heterotetramer of two BchB and two BchN subunits. [4Fe-4S] cluster is required as a cofactor.

The enzyme catalyses chlorophyllide a + oxidized 2[4Fe-4S]-[ferredoxin] + 2 ADP + 2 phosphate = protochlorophyllide a + reduced 2[4Fe-4S]-[ferredoxin] + 2 ATP + 2 H2O. It functions in the pathway porphyrin-containing compound metabolism; bacteriochlorophyll biosynthesis (light-independent). Its function is as follows. Component of the dark-operative protochlorophyllide reductase (DPOR) that uses Mg-ATP and reduced ferredoxin to reduce ring D of protochlorophyllide (Pchlide) to form chlorophyllide a (Chlide). This reaction is light-independent. The NB-protein (BchN-BchB) is the catalytic component of the complex. In Roseiflexus castenholzii (strain DSM 13941 / HLO8), this protein is Light-independent protochlorophyllide reductase subunit B.